The primary structure comprises 217 residues: Ras-related protein Rab-19 (217 aa).

The GTP site is built by S26, V28, G29, K30, T31, C32, Y42, S43, E44, S45, and T49. T31 is a binding site for Mg(2+). The Switch 1 signature appears at 39–54 (SGVYSESQQNTIGVDF). Mg(2+)-binding residues include T49 and D72. Residues 74 to 89 (AGQERFRTITQSYYRS) carry the Switch 2 motif. GTP-binding residues include G75, N130, K131, D133, S161, A162, and K163. 2 S-geranylgeranyl cysteine lipidation sites follow: C215 and C217. C217 is modified (cysteine methyl ester).

This sequence belongs to the small GTPase superfamily. Rab family. Mg(2+) is required as a cofactor. As to expression, expressed in a tissue-specific manner. Detected at high levels in intestine, lung and spleen, and at a lower level in kidney.

The protein resides in the cell membrane. The enzyme catalyses GTP + H2O = GDP + phosphate + H(+). Regulated by guanine nucleotide exchange factors (GEFs) which promote the exchange of bound GDP for free GTP. Regulated by GTPase activating proteins (GAPs) which increase the GTP hydrolysis activity. Inhibited by GDP dissociation inhibitors (GDIs). In terms of biological role, the small GTPases Rab are key regulators of intracellular membrane trafficking, from the formation of transport vesicles to their fusion with membranes. Rabs cycle between an inactive GDP-bound form and an active GTP-bound form that is able to recruit to membranes different set of downstream effectors directly responsible for vesicle formation, movement, tethering and fusion. The sequence is that of Ras-related protein Rab-19 from Mus musculus (Mouse).